The chain runs to 168 residues: Phosphopantetheine adenylyltransferase (168 aa).

Threonine 17 serves as a coordination point for substrate. Residues 17–18 (TF) and histidine 25 each bind ATP. Residues lysine 49, leucine 81, and arginine 95 each coordinate substrate. ATP is bound by residues 96-98 (GLR), glutamate 106, and 131-137 (LMYISST).

This sequence belongs to the bacterial CoaD family. As to quaternary structure, homohexamer. Requires Mg(2+) as cofactor.

It localises to the cytoplasm. It catalyses the reaction (R)-4'-phosphopantetheine + ATP + H(+) = 3'-dephospho-CoA + diphosphate. It functions in the pathway cofactor biosynthesis; coenzyme A biosynthesis; CoA from (R)-pantothenate: step 4/5. Reversibly transfers an adenylyl group from ATP to 4'-phosphopantetheine, yielding dephospho-CoA (dPCoA) and pyrophosphate. This chain is Phosphopantetheine adenylyltransferase, found in Legionella pneumophila (strain Paris).